The primary structure comprises 209 residues: FMN-dependent NADH:quinone oxidoreductase 2 (209 aa).

FMN contacts are provided by residues Ser-9, 15–17 (SVS), and 97–100 (MWNF).

It belongs to the azoreductase type 1 family. In terms of assembly, homodimer. FMN is required as a cofactor.

The enzyme catalyses 2 a quinone + NADH + H(+) = 2 a 1,4-benzosemiquinone + NAD(+). It carries out the reaction N,N-dimethyl-1,4-phenylenediamine + anthranilate + 2 NAD(+) = 2-(4-dimethylaminophenyl)diazenylbenzoate + 2 NADH + 2 H(+). Functionally, quinone reductase that provides resistance to thiol-specific stress caused by electrophilic quinones. Also exhibits azoreductase activity. Catalyzes the reductive cleavage of the azo bond in aromatic azo compounds to the corresponding amines. This is FMN-dependent NADH:quinone oxidoreductase 2 from Pseudomonas syringae pv. tomato (strain ATCC BAA-871 / DC3000).